Consider the following 53-residue polypeptide: UPF0391 membrane protein Bmul_5473/BMULJ_06024 (53 aa).

Helical transmembrane passes span 5 to 25 (ALIF…GIAA) and 30 to 50 (IAKI…LLGV).

The protein belongs to the UPF0391 family.

It is found in the cell membrane. This is UPF0391 membrane protein Bmul_5473/BMULJ_06024 from Burkholderia multivorans (strain ATCC 17616 / 249).